Consider the following 396-residue polypeptide: Serpin-ZXA (396 aa).

An RCL region spans residues 343–367 (GTEAAAATAAVITLRSAPIAEDFVA).

Belongs to the serpin family.

Its function is as follows. Probable serine protease inhibitor. The sequence is that of Serpin-ZXA from Oryza sativa subsp. japonica (Rice).